Reading from the N-terminus, the 261-residue chain is Ribonuclease PH (261 aa).

Phosphate-binding positions include arginine 86 and 124 to 126 (GTR).

Belongs to the RNase PH family. In terms of assembly, homohexameric ring arranged as a trimer of dimers.

It catalyses the reaction tRNA(n+1) + phosphate = tRNA(n) + a ribonucleoside 5'-diphosphate. Phosphorolytic 3'-5' exoribonuclease that plays an important role in tRNA 3'-end maturation. Removes nucleotide residues following the 3'-CCA terminus of tRNAs; can also add nucleotides to the ends of RNA molecules by using nucleoside diphosphates as substrates, but this may not be physiologically important. Probably plays a role in initiation of 16S rRNA degradation (leading to ribosome degradation) during starvation. This is Ribonuclease PH from Persephonella marina (strain DSM 14350 / EX-H1).